The primary structure comprises 288 residues: Protein RepA (288 aa).

The protein belongs to the initiator RepB protein family.

Functionally, this protein is essential for plasmid replication; it is involved in copy control functions. This Escherichia coli protein is Protein RepA (repA).